Here is an 864-residue protein sequence, read N- to C-terminus: DNA mismatch repair protein MutS (864 aa).

ATP is bound at residue 607–614; sequence GPNMGGKS.

It belongs to the DNA mismatch repair MutS family.

Functionally, this protein is involved in the repair of mismatches in DNA. It is possible that it carries out the mismatch recognition step. This protein has a weak ATPase activity. This Neisseria gonorrhoeae (strain ATCC 700825 / FA 1090) protein is DNA mismatch repair protein MutS.